The following is a 284-amino-acid chain: RNase adapter protein RapZ (284 aa).

An ATP-binding site is contributed by 8–15 (GRSGSGKS). 56–59 (DVRN) is a binding site for GTP. Residues 266-284 (RSRGKNVQSRHRTLEKRKT) form an RNA-binding region.

This sequence belongs to the RapZ-like family. RapZ subfamily. Homotrimer.

Functionally, modulates the synthesis of GlmS, by affecting the processing and stability of the regulatory small RNA GlmZ. When glucosamine-6-phosphate (GlcN6P) concentrations are high in the cell, RapZ binds GlmZ and targets it to cleavage by RNase E. Consequently, GlmZ is inactivated and unable to activate GlmS synthesis. Under low GlcN6P concentrations, RapZ is sequestered and inactivated by an other regulatory small RNA, GlmY, preventing GlmZ degradation and leading to synthesis of GlmS. In Citrobacter koseri (strain ATCC BAA-895 / CDC 4225-83 / SGSC4696), this protein is RNase adapter protein RapZ.